A 235-amino-acid chain; its full sequence is Uracil-DNA glycosylase (235 aa).

The active-site Proton acceptor is Asp-71.

Belongs to the uracil-DNA glycosylase (UDG) superfamily. UNG family.

It is found in the cytoplasm. The catalysed reaction is Hydrolyzes single-stranded DNA or mismatched double-stranded DNA and polynucleotides, releasing free uracil.. In terms of biological role, excises uracil residues from the DNA which can arise as a result of misincorporation of dUMP residues by DNA polymerase or due to deamination of cytosine. This is Uracil-DNA glycosylase from Helicobacter hepaticus (strain ATCC 51449 / 3B1).